The sequence spans 454 residues: UPF0210 protein Blon_2054/BLIJ_2131 (454 aa).

It belongs to the UPF0210 family. As to quaternary structure, homodimer.

The sequence is that of UPF0210 protein Blon_2054/BLIJ_2131 from Bifidobacterium longum subsp. infantis (strain ATCC 15697 / DSM 20088 / JCM 1222 / NCTC 11817 / S12).